A 533-amino-acid polypeptide reads, in one-letter code: Protein mono-ADP-ribosyltransferase PARP3 (533 aa).

The interval 1–30 is disordered; it reads MAPKRKASVQTEGSKKRRQGTEEEDSFRST. Lys-6 bears the N6-(ADP-ribosyl)lysine mark. Glu-12 bears the ADP-ribosyl glutamic acid mark. The Nuclear localization signal signature appears at 14-18; sequence SKKRR. Glu-24 and Glu-32 each carry ADP-ribosyl glutamic acid. The WGR domain maps to 57–147; that stretch reads GIQVHEDYDC…DRFVAQPNKY (91 aa). At Asp-138 the chain carries ADP-ribosyl aspartic acid. Glu-160, Glu-230, Glu-309, and Glu-310 each carry ADP-ribosyl glutamic acid. The PARP alpha-helical domain occupies 181-299; that stretch reads PCSLDPATQN…DIELAQTLQA (119 aa). One can recognise a PARP catalytic domain in the interval 313–533; sequence HPLDRDYQLL…RLRYLLEIHL (221 aa).

It belongs to the ARTD/PARP family. As to quaternary structure, interacts with PARP1; leading to activate PARP1 in absence of DNA. Interacts with PRKDC. Interacts with XRCC5/Ku80; the interaction is dependent on nucleic acids. Interacts with XRCC6/Ku70; the interaction is dependent on nucleic acids. Interacts with EZH2, HDAC1, HDAC2, SUZ12, YY1, LRIG3 and LIG4. In terms of processing, auto-ADP-ribosylated.

Its subcellular location is the nucleus. It localises to the chromosome. The protein localises to the cytoplasm. It is found in the cytoskeleton. The protein resides in the microtubule organizing center. Its subcellular location is the centrosome. It localises to the centriole. It carries out the reaction L-aspartyl-[protein] + NAD(+) = 4-O-(ADP-D-ribosyl)-L-aspartyl-[protein] + nicotinamide. The enzyme catalyses L-glutamyl-[protein] + NAD(+) = 5-O-(ADP-D-ribosyl)-L-glutamyl-[protein] + nicotinamide. The catalysed reaction is L-lysyl-[protein] + NAD(+) = N(6)-(ADP-D-ribosyl)-L-lysyl-[protein] + nicotinamide + H(+). Functionally, mono-ADP-ribosyltransferase that mediates mono-ADP-ribosylation of target proteins and plays a key role in the response to DNA damage. Mediates mono-ADP-ribosylation of glutamate, aspartate or lysine residues on target proteins. In contrast to PARP1 and PARP2, it is not able to mediate poly-ADP-ribosylation. Involved in DNA repair by mediating mono-ADP-ribosylation of a limited number of acceptor proteins involved in chromatin architecture and in DNA metabolism, such as histone H2B, XRCC5 and XRCC6. ADP-ribosylation follows DNA damage and appears as an obligatory step in a detection/signaling pathway leading to the reparation of DNA strand breaks. Involved in single-strand break repair by catalyzing mono-ADP-ribosylation of histone H2B on 'Glu-2' (H2BE2ADPr) of nucleosomes containing nicked DNA. Cooperates with the XRCC5-XRCC6 (Ku80-Ku70) heterodimer to limit end-resection thereby promoting accurate NHEJ. Suppresses G-quadruplex (G4) structures in response to DNA damage. Associates with a number of DNA repair factors and is involved in the response to exogenous and endogenous DNA strand breaks. Together with APLF, promotes the retention of the LIG4-XRCC4 complex on chromatin and accelerate DNA ligation during non-homologous end-joining (NHEJ). May link the DNA damage surveillance network to the mitotic fidelity checkpoint. Acts as a negative regulator of immunoglobulin class switch recombination, probably by controlling the level of AICDA /AID on the chromatin. In addition to proteins, also able to ADP-ribosylate DNA: mediates DNA mono-ADP-ribosylation of DNA strand break termini via covalent addition of a single ADP-ribose moiety to a 5'- or 3'-terminal phosphate residues in DNA containing multiple strand breaks. The polypeptide is Protein mono-ADP-ribosyltransferase PARP3 (Mus musculus (Mouse)).